The sequence spans 165 residues: MASIAVCPGSFDPVTYGHLDIIRRGAKVFDKVYVVVLNNSSKKPLFSAEERVQLLEEVTKDLHNVVVDSYQGLLVDYAKSKHASAILRGLRAVSDFEYEMQITSMNRILNEQIETFFMMTNNQYSFLSSSIVKEVAKYNGNISELVPKVVEEALRKKFAHAENHL.

S10 contributes to the substrate binding site. Residues 10–11 (SF) and H18 contribute to the ATP site. The substrate site is built by K42, L74, and R88. ATP is bound by residues 89–91 (GLR), E99, and 124–130 (YSFLSSS).

It belongs to the bacterial CoaD family. As to quaternary structure, homohexamer. Requires Mg(2+) as cofactor.

The protein resides in the cytoplasm. It catalyses the reaction (R)-4'-phosphopantetheine + ATP + H(+) = 3'-dephospho-CoA + diphosphate. It participates in cofactor biosynthesis; coenzyme A biosynthesis; CoA from (R)-pantothenate: step 4/5. Its function is as follows. Reversibly transfers an adenylyl group from ATP to 4'-phosphopantetheine, yielding dephospho-CoA (dPCoA) and pyrophosphate. The sequence is that of Phosphopantetheine adenylyltransferase from Anoxybacillus flavithermus (strain DSM 21510 / WK1).